A 225-amino-acid polypeptide reads, in one-letter code: Ribonuclease 3 (225 aa).

One can recognise an RNase III domain in the interval Phe-4 to Asn-133. Residue Glu-46 participates in Mg(2+) binding. Residue Asp-50 is part of the active site. Mg(2+) contacts are provided by Asn-119 and Glu-122. Glu-122 is an active-site residue. The region spanning Asp-158 to Lys-225 is the DRBM domain.

The protein belongs to the ribonuclease III family. Homodimer. Mg(2+) is required as a cofactor.

The protein localises to the cytoplasm. It carries out the reaction Endonucleolytic cleavage to 5'-phosphomonoester.. Functionally, digests double-stranded RNA. Involved in the processing of primary rRNA transcript to yield the immediate precursors to the large and small rRNAs (23S and 16S). Processes some mRNAs, and tRNAs when they are encoded in the rRNA operon. Processes pre-crRNA and tracrRNA of type II CRISPR loci if present in the organism. This chain is Ribonuclease 3, found in Rickettsia prowazekii (strain Madrid E).